Here is a 602-residue protein sequence, read N- to C-terminus: Arginine--tRNA ligase (602 aa).

The short motif at 124 to 134 (ANPTGPVHVGR) is the 'HIGH' region element.

It belongs to the class-I aminoacyl-tRNA synthetase family.

The protein localises to the cytoplasm. It catalyses the reaction tRNA(Arg) + L-arginine + ATP = L-arginyl-tRNA(Arg) + AMP + diphosphate. The protein is Arginine--tRNA ligase of Halorubrum lacusprofundi (strain ATCC 49239 / DSM 5036 / JCM 8891 / ACAM 34).